Reading from the N-terminus, the 261-residue chain is uncharacterized protein (261 aa).

Residues 16–147 (KQTSLVLQNL…QTNVNVLRSQ (132 aa)) are a coiled coil.

Its subcellular location is the cytoplasm. This is an uncharacterized protein from Schizosaccharomyces pombe (strain 972 / ATCC 24843) (Fission yeast).